The primary structure comprises 427 residues: Isocitrate dehydrogenase [NADP] (427 aa).

Thr114 provides a ligand contact to NADP(+). D-threo-isocitrate-binding residues include Ser123, Asn125, Arg129, Arg139, and Arg163. Residue Asp317 participates in Mg(2+) binding. NADP(+)-binding positions include 349-355 (HGTAPKY), Asn362, Tyr401, and Arg405.

Belongs to the isocitrate and isopropylmalate dehydrogenases family. Homodimer. The cofactor is Mg(2+). Mn(2+) is required as a cofactor.

The catalysed reaction is D-threo-isocitrate + NADP(+) = 2-oxoglutarate + CO2 + NADPH. Its function is as follows. Catalyzes the oxidative decarboxylation of isocitrate to 2-oxoglutarate and carbon dioxide with the concomitant reduction of NADP(+). This Coxiella burnetii (strain RSA 493 / Nine Mile phase I) protein is Isocitrate dehydrogenase [NADP] (icd).